A 202-amino-acid chain; its full sequence is Probable host range protein 2-2 (202 aa).

This sequence belongs to the poxviridae C7 protein family.

Its function is as follows. Plays a role for multiplication of the virus in different cell types. The sequence is that of Probable host range protein 2-2 from Oryctolagus cuniculus (Rabbit).